A 483-amino-acid polypeptide reads, in one-letter code: FAD-linked oxidoreductase easE (483 aa).

In terms of domain architecture, FAD-binding PCMH-type spans 10–193; that stretch reads QGRLPFYSAV…TEATVRVFSD (184 aa).

The protein belongs to the oxygen-dependent FAD-linked oxidoreductase family. FAD serves as cofactor.

It participates in alkaloid biosynthesis; ergot alkaloid biosynthesis. Functionally, FAD-linked oxidoreductase; part of the gene cluster that mediates the biosynthesis of fungal ergot alkaloid. DmaW catalyzes the first step of ergot alkaloid biosynthesis by condensing dimethylallyl diphosphate (DMAP) and tryptophan to form 4-dimethylallyl-L-tryptophan. The second step is catalyzed by the methyltransferase easF that methylates 4-dimethylallyl-L-tryptophan in the presence of S-adenosyl-L-methionine, resulting in the formation of 4-dimethylallyl-L-abrine. The catalase easC and the FAD-dependent oxidoreductase easE then transform 4-dimethylallyl-L-abrine to chanoclavine-I which is further oxidized by easD in the presence of NAD(+), resulting in the formation of chanoclavine-I aldehyde. Agroclavine dehydrogenase easG then mediates the conversion of chanoclavine-I aldehyde to agroclavine via a non-enzymatic adduct reaction: the substrate is an iminium intermediate that is formed spontaneously from chanoclavine-I aldehyde in the presence of glutathione. The presence of easA is not required to complete this reaction. Further conversion of agroclavine to paspalic acid is a two-step process involving oxidation of agroclavine to elymoclavine and of elymoclavine to paspalic acid, the second step being performed by the elymoclavine oxidase cloA. Paspalic acid is then further converted to D-lysergic acid. Ergopeptines are assembled from D-lysergic acid and three different amino acids by the D-lysergyl-peptide-synthetases composed each of a monomudular and a trimodular nonribosomal peptide synthetase subunit. LpsB and lpsC encode the monomodular subunits responsible for D-lysergic acid activation and incorporation into the ergopeptine backbone. LpsA1 and A2 subunits encode the trimodular nonribosomal peptide synthetase assembling the tripeptide portion of ergopeptines. LpsA1 is responsible for formation of the major ergopeptine, ergotamine, and lpsA2 for alpha-ergocryptine, the minor ergopeptine of the total alkaloid mixture elaborated by C.purpurea. D-lysergyl-tripeptides are assembled by the nonribosomal peptide synthetases and released as N-(D-lysergyl-aminoacyl)-lactams. Cyclolization of the D-lysergyl-tripeptides is performed by the Fe(2+)/2-ketoglutarate-dependent dioxygenase easH which introduces a hydroxyl group into N-(D-lysergyl-aminoacyl)-lactam at alpha-C of the aminoacyl residue followed by spontaneous condensation with the terminal lactam carbonyl group. The chain is FAD-linked oxidoreductase easE from Claviceps purpurea (strain 20.1) (Ergot fungus).